The chain runs to 148 residues: Copper transport protein ctr6 (148 aa).

The Extracellular segment spans residues 1 to 33; that stretch reads MNHGGNSTMRHCSMKMTFNTDYDNLCIVFKSWH. A helical membrane pass occupies residues 34 to 54; the sequence is IGNLSQFLLSLLAIAILGYLF. Over 55-108 the chain is Cytoplasmic; sequence ERLRSFTSLKETEFQRGYAGQQSEGLLTHHSKSLKSGRPFRLCALYAVQLVFSY. Residues 109–129 traverse the membrane as a helical segment; it reads FLMLVAMTYNAYVILAIAIGA. Over 130–148 the chain is Extracellular; that stretch reads AFGYRRSHCDTVQTVGLCH.

Belongs to the copper transporter (Ctr) (TC 1.A.56) family. SLC31A subfamily. Homotrimer.

The protein localises to the vacuole membrane. Its function is as follows. Mobilizes stored copper from the vacuole to the cytoplasm under conditions of copper limitation. The protein is Copper transport protein ctr6 (ctr6) of Schizosaccharomyces pombe (strain 972 / ATCC 24843) (Fission yeast).